The primary structure comprises 351 residues: 2-Hydroxyacid oxidase 2 (351 aa).

Residues 2 to 351 (SLVCLTDFQA…NRNLVQFSRL (350 aa)) enclose the FMN hydroxy acid dehydrogenase domain. Residues 77 to 79 (PTG), serine 106, and glutamine 128 contribute to the FMN site. Tyrosine 130 contributes to the a 2-oxocarboxylate binding site. Threonine 156 contributes to the FMN binding site. Arginine 165 provides a ligand contact to a 2-oxocarboxylate. At threonine 178 the chain carries Phosphothreonine. Lysine 222 is an FMN binding site. Residue histidine 246 is the Proton acceptor of the active site. Arginine 249 provides a ligand contact to a 2-oxocarboxylate. Residues 277–281 (DGGVR) and 300–301 (GR) contribute to the FMN site. Residues 349–351 (SRL) carry the Microbody targeting signal motif.

It belongs to the FMN-dependent alpha-hydroxy acid dehydrogenase family. Homotetramer. FMN serves as cofactor. As to expression, expressed in the liver and kidney.

The protein resides in the peroxisome. It carries out the reaction a (2S)-2-hydroxycarboxylate + O2 = a 2-oxocarboxylate + H2O2. The enzyme catalyses 2-hydroxyhexadecanoate + O2 = 2-oxohexadecanoate + H2O2. The catalysed reaction is 2-hydroxyoctanoate + O2 = 2-oxooctanoate + H2O2. It functions in the pathway lipid metabolism; fatty acid metabolism. Its function is as follows. Oxidase that catalyzes the oxidation of medium and long chain hydroxyacids such as 2-hydroxyhexadecanoate and 2-hydroxyoctanoate, to the correspondong 2-oxoacids. Its role in the oxidation of 2-hydroxy fatty acids may contribute to the general pathway of fatty acid alpha-oxidation. Active in vitro with the artificial electron acceptor 2,6-dichlorophenolindophenol (DCIP), but O2 is believed to be the physiological electron acceptor, leading to the production of H2O2. Is not active on glycolate, glyoxylate, L-lactate and 2-hydroxybutanoate. In Homo sapiens (Human), this protein is 2-Hydroxyacid oxidase 2 (HAO2).